Reading from the N-terminus, the 279-residue chain is Ferredoxin-type protein NapG (279 aa).

The tat-type signal signal peptide spans 1-50; that stretch reads MKVRLKSKKKMKKPALNPERRKFLKEATRTAGGLAGVGILLGLQQNQSLA. 4Fe-4S ferredoxin-type domains are found at residues 63 to 92, 100 to 132, 141 to 177, and 188 to 219; these read QDAK…LASL, TPYF…RQAT, LSVL…LETQ, and FIPT…ILPM. Residues cysteine 72, cysteine 75, cysteine 78, cysteine 82, cysteine 110, cysteine 113, cysteine 118, cysteine 122, cysteine 150, cysteine 158, cysteine 161, cysteine 165, cysteine 197, cysteine 200, cysteine 203, and cysteine 207 each coordinate [4Fe-4S] cluster.

It depends on [4Fe-4S] cluster as a cofactor. Post-translationally, predicted to be exported by the Tat system. The position of the signal peptide cleavage has not been experimentally proven.

It is found in the periplasm. Functionally, required for electron transfer from ubiquinol, via NapC, to the periplasmic nitrate reductase NapAB complex. The protein is Ferredoxin-type protein NapG (napG) of Haemophilus influenzae (strain ATCC 51907 / DSM 11121 / KW20 / Rd).